The sequence spans 688 residues: Potassium-transporting ATPase ATP-binding subunit (688 aa).

The next 4 membrane-spanning stretches (helical) occupy residues 37 to 57, 65 to 85, 219 to 239, and 262 to 282; these read FLVY…LVGI, ILGI…AEAI, IALQ…TVSL, and VALL…SIGI. Catalysis depends on aspartate 313, which acts as the 4-aspartylphosphate intermediate. ATP is bound by residues aspartate 350, glutamate 354, 383–390, and lysine 401; that span reads FTAKTRMS. Mg(2+) is bound by residues aspartate 524 and aspartate 528. 3 helical membrane passes run 594 to 614, 622 to 642, and 668 to 688; these read FAII…LNIM, AIFS…PLAL, and IIVP…IGIV.

It belongs to the cation transport ATPase (P-type) (TC 3.A.3) family. Type IA subfamily. In terms of assembly, the system is composed of three essential subunits: KdpA, KdpB and KdpC.

It is found in the cell membrane. The catalysed reaction is K(+)(out) + ATP + H2O = K(+)(in) + ADP + phosphate + H(+). Part of the high-affinity ATP-driven potassium transport (or Kdp) system, which catalyzes the hydrolysis of ATP coupled with the electrogenic transport of potassium into the cytoplasm. This subunit is responsible for energy coupling to the transport system and for the release of the potassium ions to the cytoplasm. This chain is Potassium-transporting ATPase ATP-binding subunit, found in Clostridium botulinum (strain Alaska E43 / Type E3).